The sequence spans 226 residues: UPF0173 metal-dependent hydrolase CTN_1413 (226 aa).

It belongs to the UPF0173 family.

This Thermotoga neapolitana (strain ATCC 49049 / DSM 4359 / NBRC 107923 / NS-E) protein is UPF0173 metal-dependent hydrolase CTN_1413.